The chain runs to 785 residues: Endonuclease MutS2 (785 aa).

Position 335 to 342 (335 to 342 (GPNTGGKT)) interacts with ATP. A Smr domain is found at 710–785 (LDLRGERYED…GNGVTIVEFK (76 aa)).

The protein belongs to the DNA mismatch repair MutS family. MutS2 subfamily. In terms of assembly, homodimer. Binds to stalled ribosomes, contacting rRNA.

Its function is as follows. Endonuclease that is involved in the suppression of homologous recombination and thus may have a key role in the control of bacterial genetic diversity. Acts as a ribosome collision sensor, splitting the ribosome into its 2 subunits. Detects stalled/collided 70S ribosomes which it binds and splits by an ATP-hydrolysis driven conformational change. Acts upstream of the ribosome quality control system (RQC), a ribosome-associated complex that mediates the extraction of incompletely synthesized nascent chains from stalled ribosomes and their subsequent degradation. Probably generates substrates for RQC. The chain is Endonuclease MutS2 from Listeria monocytogenes serovar 1/2a (strain ATCC BAA-679 / EGD-e).